Consider the following 183-residue polypeptide: PARTHHDITTRDQYPLISRDRDQYGMIGRDQYNMSGQNYSKSRQIAKATTAVTAGDSLLVLSSLTLVGTVIALIVATPLLVIFSPILVPALITVALLITGFLSSGAFGIAAITVFSWIYKYATGEHPQGSDKLDSARMKLGSKAQDMKDRAYYYGQQHTGEEHDRDRDHRTDRDRTRGTQHTT.

The segment at 1-47 (PARTHHDITTRDQYPLISRDRDQYGMIGRDQYNMSGQNYSKSRQIAK) is polar. Repeats lie at residues 11–20 (RDQYPLISRD) and 21–30 (RDQYGMIGRD). The segment at 48-119 (ATTAVTAGDS…AAITVFSWIY (72 aa)) is hydrophobic. 2 consecutive transmembrane segments (helical) span residues 57 to 77 (SLLV…IVAT) and 99 to 119 (TGFL…SWIY). The tract at residues 154-183 (YGQQHTGEEHDRDRDHRTDRDRTRGTQHTT) is disordered. The span at 159–177 (TGEEHDRDRDHRTDRDRTR) shows a compositional bias: basic and acidic residues.

Belongs to the oleosin family.

The protein localises to the lipid droplet. It localises to the membrane. In terms of biological role, may have a structural role to stabilize the lipid body during desiccation of the seed by preventing coalescence of the oil. Probably interacts with both lipid and phospholipid moieties of lipid bodies. May also provide recognition signals for specific lipase anchorage in lipolysis during seedling growth. The protein is Oleosin Bn-V of Brassica napus (Rape).